The chain runs to 510 residues: Ribonuclease Y (510 aa).

Residues 1–21 (MLIYILSGLGVLVGALLGYVV) traverse the membrane as a helical segment. A KH domain is found at 200-260 (TVSTIMLPND…LRREIAKRTI (61 aa)). One can recognise an HD domain in the interval 326 to 419 (VLNHSIEVAL…VAAADALSAA (94 aa)).

The protein belongs to the RNase Y family.

It is found in the cell membrane. Endoribonuclease that initiates mRNA decay. The protein is Ribonuclease Y of Thermosipho melanesiensis (strain DSM 12029 / CIP 104789 / BI429).